The following is a 129-amino-acid chain: Putative membrane protein insertion efficiency factor (129 aa).

It belongs to the UPF0161 family.

It is found in the cell inner membrane. Could be involved in insertion of integral membrane proteins into the membrane. This Rhodopseudomonas palustris (strain TIE-1) protein is Putative membrane protein insertion efficiency factor.